Consider the following 309-residue polypeptide: Peptide methionine sulfoxide reductase MsrA/MsrB (309 aa).

The tract at residues 1–153 is peptide methionine sulfoxide reductase A; the sequence is MIYLAGGCFW…PNGYCHIDIN (153 aa). The active site involves C8. The region spanning 170–293 is the MsrB domain; that stretch reads ATEIKEKLSA…NSLSITFIPK (124 aa). The Nucleophile role is filled by C282.

The protein in the N-terminal section; belongs to the MsrA Met sulfoxide reductase family. It in the C-terminal section; belongs to the MsrB Met sulfoxide reductase family.

It catalyses the reaction L-methionyl-[protein] + [thioredoxin]-disulfide + H2O = L-methionyl-(S)-S-oxide-[protein] + [thioredoxin]-dithiol. It carries out the reaction [thioredoxin]-disulfide + L-methionine + H2O = L-methionine (S)-S-oxide + [thioredoxin]-dithiol. The enzyme catalyses L-methionyl-[protein] + [thioredoxin]-disulfide + H2O = L-methionyl-(R)-S-oxide-[protein] + [thioredoxin]-dithiol. Functionally, has an important function as a repair enzyme for proteins that have been inactivated by oxidation. Catalyzes the reversible oxidation-reduction of methionine sulfoxide in proteins to methionine. This chain is Peptide methionine sulfoxide reductase MsrA/MsrB (msrAB), found in Streptococcus pyogenes serotype M1.